The following is a 213-amino-acid chain: Holliday junction resolvase RecU (213 aa).

Thr99, Asp101, Glu114, and Gln133 together coordinate Mg(2+).

It belongs to the RecU family. Requires Mg(2+) as cofactor.

It localises to the cytoplasm. The enzyme catalyses Endonucleolytic cleavage at a junction such as a reciprocal single-stranded crossover between two homologous DNA duplexes (Holliday junction).. In terms of biological role, endonuclease that resolves Holliday junction intermediates in genetic recombination. Cleaves mobile four-strand junctions by introducing symmetrical nicks in paired strands. Promotes annealing of linear ssDNA with homologous dsDNA. Required for DNA repair, homologous recombination and chromosome segregation. The protein is Holliday junction resolvase RecU of Lactococcus lactis subsp. cremoris (strain MG1363).